The following is a 354-amino-acid chain: Uroporphyrinogen decarboxylase (354 aa).

Residues 27 to 31, aspartate 77, tyrosine 154, threonine 209, and histidine 327 contribute to the substrate site; that span reads RQAGR.

It belongs to the uroporphyrinogen decarboxylase family. Homodimer.

The protein localises to the cytoplasm. The enzyme catalyses uroporphyrinogen III + 4 H(+) = coproporphyrinogen III + 4 CO2. Its pathway is porphyrin-containing compound metabolism; protoporphyrin-IX biosynthesis; coproporphyrinogen-III from 5-aminolevulinate: step 4/4. Its function is as follows. Catalyzes the decarboxylation of four acetate groups of uroporphyrinogen-III to yield coproporphyrinogen-III. In Salmonella paratyphi B (strain ATCC BAA-1250 / SPB7), this protein is Uroporphyrinogen decarboxylase.